Consider the following 378-residue polypeptide: MASSNRHWPSMFKSKPHPHQWQHDINSPLLPSASHRSSPFSSGCEVERSPEPKPRWNPKPEQIRILEAIFNSGMVNPPREEIRRIRAQLQEYGQVGDANVFYWFQNRKSRSKHKLRLLHNHSKHSLPQTQPQPQPQPSASSSSSSSSSSSKSTKPRKSKNKNNTNLSLGGSQMMGMFPPEPAFLFPVSTVGGFEGITVSSQLGFLSGDMIEQQKPAPTCTGLLLSEIMNGSVSYGTHHQQHLSEKEVEEMRMKMLQQPQTQICYATTNHQIASYNNNNNNNNIMLHIPPTTSTATTITTSHSLATVPSTSDQLQVQADARIRVFINEMELEVSSGPFNVRDAFGEEVVLINSAGQPIVTDEYGVALHPLQHGASYYLI.

2 disordered regions span residues 1 to 60 (MASS…NPKP) and 123 to 173 (KHSL…GSQM). Over residues 32–42 (SASHRSSPFSS) the composition is skewed to low complexity. Residues 45-54 (EVERSPEPKP) show a composition bias toward basic and acidic residues. The segment at residues 51–115 (EPKPRWNPKP…NRKSRSKHKL (65 aa)) is a DNA-binding region (homeobox; WUS-type). Composition is skewed to low complexity over residues 137 to 152 (PSAS…SSKS) and 161 to 171 (KNNTNLSLGGS).

Belongs to the WUS homeobox family. In terms of tissue distribution, expressed in the basal cell and later at the boundary between suspensor and proembryo. Expressed at low levels in proliferating tissues post embryonically. Detected in vegetative shoot apical meristem, leaf primordia, floral meristems, emerging floral organs, epidermal layer of the placenta and in the upper portion of the root meristematic zone.

It is found in the nucleus. The protein localises to the cytoplasm. Its function is as follows. Homeodomain transcription factor required for meristem growth and early development. Promotes cell proliferation and prevents premature differentiation in meristematic tissues during postembryonic development. Essential for maintaining tissue growth during embryogenesis. May act by repressing TSS to promote meristematic proliferation. Involved in the transcriptional activation of a subset of cytokinin response factors. May act as a negative regulator of cytokinin signaling in the dark. The protein is WUSCHEL-related homeobox 9 of Arabidopsis thaliana (Mouse-ear cress).